A 639-amino-acid chain; its full sequence is MQFHLNGFRPGNPLIAPASPLAPAHTEAVPSQVDVLIVGCGPAGLTLAAQLAAFPDIRTCIVEQKEGPMELGQADGIACRTMEMFEAFEFADSILKEACWINDVTFWKPDPAQPGRIARHGRVQDTEDGLSEFPHVILNQARVHDHYLERMRNSPSRLEPHYARRVLDVKIDHGAADYPVTVTLERCDAAHAGQIETVQARYVVGCDGARSNVRRAIGRQLVGDSANQAWGVMDVLAVTDFPDVRYKVAIQSEQGNVLIIPREGGHLVRFYVEMDKLDADERVASRNITVEQLIATAQRVLHPYKLDVKNVPWWSVYEIGQRICAKYDDVADAVATPDSPLPRVFIAGDACHTHSPKAGQGMNFSMQDSFNLGWKLAAVLRKQCAPELLHTYSSERQVVAQQLIDFDREWAKMFSDPAKEGGQGGVDPKEFQKYFEQHGRFTAGVGTHYAPSLLTGQASHQALASGFTVGMRFHSAPVVRVSDAKPLQLGHCGKADGRWRLYAFAGQNDLAQPESGLLALCRFLESDAASPLRRFTPSGQDIDSIFDLRAIFPQAYTEVALETLPALLLPPKGQLGMIDYEKVFSPDLKNAGQDIFELRGIDRQQGALVVVRPDQYVAQVLPLGDHAALSAYFESFMRA.

Residues 34 to 64, Gln-73, Val-166, Asn-212, 269 to 271, Tyr-317, Asp-349, and Ser-365 contribute to the FAD site; these read DVLIVGCGPAGLTLAAQLAAFPDIRTCIVEQ and RFY.

The protein belongs to the PheA/TfdB FAD monooxygenase family. As to quaternary structure, homodimer. Requires FAD as cofactor.

It catalyses the reaction 3-hydroxybenzoate + NADPH + O2 + H(+) = 3,4-dihydroxybenzoate + NADP(+) + H2O. Functionally, converts 3-hydroxybenzoate (m-hydroxybenzoate), and to a lesser extent p-hydroxybenzoate, to 3,4-dihydroxybenzoate (protocatechuate). Also acts on a number of analogs of 3-hydroxybenzoate substituted in the 2, 4, 5 and 6 positions. This chain is 3-hydroxybenzoate 4-monooxygenase (mobA), found in Comamonas testosteroni (Pseudomonas testosteroni).